A 305-amino-acid polypeptide reads, in one-letter code: 4-diphosphocytidyl-2-C-methyl-D-erythritol kinase (305 aa).

Lysine 10 is an active-site residue. 95–105 provides a ligand contact to ATP; it reads PVTAGLGGGSS. Aspartate 136 is a catalytic residue. Residues 286 to 305 are disordered; sequence PGVTPWRSPRSASSPSTKRS. The segment covering 290-305 has biased composition (low complexity); it reads PWRSPRSASSPSTKRS.

The protein belongs to the GHMP kinase family. IspE subfamily.

The catalysed reaction is 4-CDP-2-C-methyl-D-erythritol + ATP = 4-CDP-2-C-methyl-D-erythritol 2-phosphate + ADP + H(+). It functions in the pathway isoprenoid biosynthesis; isopentenyl diphosphate biosynthesis via DXP pathway; isopentenyl diphosphate from 1-deoxy-D-xylulose 5-phosphate: step 3/6. Functionally, catalyzes the phosphorylation of the position 2 hydroxy group of 4-diphosphocytidyl-2C-methyl-D-erythritol. This chain is 4-diphosphocytidyl-2-C-methyl-D-erythritol kinase, found in Anaeromyxobacter sp. (strain Fw109-5).